The sequence spans 651 residues: ATP-binding cassette sub-family G member 5 (651 aa).

A disordered region spans residues 1 to 32; sequence MGDLSSLTPGGSMGLQVNRGSQSSLEGAPATA. Residues 1–383 are Cytoplasmic-facing; sequence MGDLSSLTPG…RVTRNLVRNK (383 aa). Residues 52-293 enclose the ABC transporter domain; that stretch reads RPWWDITSCR…FNDCGYPCPE (242 aa). 86-93 provides a ligand contact to ATP; sequence GSSGSGKT. The helical transmembrane segment at 384–404 threads the bilayer; it reads LAVITRLLQNLIMGLFLLFFV. The 258-residue stretch at 388–645 folds into the ABC transmembrane type-2 domain; sequence TRLLQNLIMG…ILGIVVFKIR (258 aa). Residues 405 to 421 are Extracellular-facing; it reads LRVRSNVLKGAIQDRVG. Residues 422–442 form a helical membrane-spanning segment; sequence LLYQFVGATPYTGMLNAVNLF. Over 443 to 467 the chain is Cytoplasmic; it reads PVLRAVSDQESQDGLYQKWQMMLAY. The chain crosses the membrane as a helical span at residues 468–489; the sequence is ALHVLPFSVVATMIFSSVCYWT. The Extracellular portion of the chain corresponds to 490 to 500; sequence LGLHPEVARFG. A helical transmembrane segment spans residues 501–521; the sequence is YFSAALLAPHLIGEFLTLVLL. Residues 522–528 lie on the Cytoplasmic side of the membrane; the sequence is GIVQNPN. The chain crosses the membrane as a helical span at residues 529–549; that stretch reads IVNSVVALLSIAGVLVGSGFL. The Extracellular portion of the chain corresponds to 550–623; that stretch reads RNIQEMPIPF…PGATSRFTMN (74 aa). 2 N-linked (GlcNAc...) asparagine glycosylation sites follow: Asn584 and Asn591. A helical membrane pass occupies residues 624–644; that stretch reads FLILYSFIPALVILGIVVFKI. The Cytoplasmic portion of the chain corresponds to 645-651; it reads RDHLISR.

Belongs to the ABC transporter superfamily. ABCG family. Eye pigment precursor importer (TC 3.A.1.204) subfamily. As to quaternary structure, heterodimer with ABCG8. Mg(2+) is required as a cofactor. N-glycosylated. Strongly expressed in the liver, lower levels in the small intestine and colon.

Its subcellular location is the cell membrane. The protein resides in the apical cell membrane. The catalysed reaction is cholesterol(in) + ATP + H2O = cholesterol(out) + ADP + phosphate + H(+). The enzyme catalyses sitosterol(in) + ATP + H2O = sitosterol(out) + ADP + phosphate + H(+). The ATPase activity of the heterodimer is stimulated by cholate. Taurocholate, glycocholate, taurochenodeoxycholate, glycochenodeoxycholate and taurodeoxycholate also stimulate ATPase activity, but to a lower degree. Glycodeoxycholate has no significant effect on ATPase activity. ATPase activity is inhibited by vanadate and by berillium fluoride. Functionally, ABCG5 and ABCG8 form an obligate heterodimer that mediates Mg(2+)- and ATP-dependent sterol transport across the cell membrane. Plays an essential role in the selective transport of dietary plant sterols and cholesterol in and out of the enterocytes and in the selective sterol excretion by the liver into bile. Required for normal sterol homeostasis. The heterodimer with ABCG8 has ATPase activity. The chain is ATP-binding cassette sub-family G member 5 from Homo sapiens (Human).